The primary structure comprises 185 residues: Peptidyl-tRNA hydrolase (185 aa).

Y14 contributes to the tRNA binding site. Residue H19 is the Proton acceptor of the active site. TRNA-binding residues include Y65, N67, and N113.

It belongs to the PTH family. As to quaternary structure, monomer.

The protein localises to the cytoplasm. It carries out the reaction an N-acyl-L-alpha-aminoacyl-tRNA + H2O = an N-acyl-L-amino acid + a tRNA + H(+). Hydrolyzes ribosome-free peptidyl-tRNAs (with 1 or more amino acids incorporated), which drop off the ribosome during protein synthesis, or as a result of ribosome stalling. In terms of biological role, catalyzes the release of premature peptidyl moieties from peptidyl-tRNA molecules trapped in stalled 50S ribosomal subunits, and thus maintains levels of free tRNAs and 50S ribosomes. The protein is Peptidyl-tRNA hydrolase of Rickettsia rickettsii (strain Iowa).